The following is a 327-amino-acid chain: Glycolipid sulfotransferase BCG_1434 (327 aa).

A 3'-phosphoadenylyl sulfate-binding site is contributed by Lys-40 to Trp-45. Residue His-97 is the Proton acceptor of the active site. 3'-phosphoadenylyl sulfate is bound at residue Arg-116–Ser-124.

Belongs to the sulfotransferase 1 family.

Functionally, involved in the synthesis of cell wall sulfolipids. The protein is Glycolipid sulfotransferase BCG_1434 of Mycobacterium bovis (strain BCG / Pasteur 1173P2).